The chain runs to 623 residues: Immunity-related GTPase family Q protein (623 aa).

A disulfide bond links C152 and C158. Positions 155–180 form a coiled coil; the sequence is SDGCEELERLRAALQSQAEALRRLLP. The LIR 1 motif lies at 186–189; that stretch reads FEVL. T203 carries the phosphothreonine modification. In terms of domain architecture, IRG-type G spans 223–449; it reads ARLDLAVAGK…PGLCEWLRRA (227 aa). The tract at residues 334 to 393 is disordered; the sequence is EGEDPECLGEGKMENPKGESLKNAGGGGLENALSKGREKCSAGSQKAGSGEGPGKAGSEG. The segment covering 342–353 has biased composition (basic and acidic residues); that stretch reads GEGKMENPKGES. The short motif at 421–424 is the LIR 2 element; that stretch reads WEVL.

It belongs to the TRAFAC class dynamin-like GTPase superfamily. IRG family. In terms of assembly, interacts (via LIR motif 1) with GABARAPL2. Interacts (via LIR motif 2) with MAP1LC3B/LC3B.

It is found in the lysosome. Its subcellular location is the cytoplasmic vesicle. The protein localises to the autophagosome. Autophagy receptor that specifically promotes clearance of misfolded MHC class I molecules by targeting them to the lysosome for degradation. Acts as a molecular adapter that specifically recognizes and binds (1) misfolded MHC class I molecules following their ubiquitination, as well as (2) autophagy-related proteins, promoting the recruitment of misfolded MHC class I molecules to autophagy machinery for degradation. Degradation of misfolded MHC class I molecules is essential to prevent accumulation of defective MHC class I complexes at the surface of CD8(+) T-cells and prevent a stronger T-cell-mediated response. In contrast to other members of the family, does not show GTPase activity. This chain is Immunity-related GTPase family Q protein, found in Homo sapiens (Human).